Here is a 597-residue protein sequence, read N- to C-terminus: Adenine deaminase (597 aa).

This sequence belongs to the metallo-dependent hydrolases superfamily. Adenine deaminase family. It depends on Mn(2+) as a cofactor.

It carries out the reaction adenine + H2O + H(+) = hypoxanthine + NH4(+). This chain is Adenine deaminase, found in Paracoccus denitrificans (strain Pd 1222).